The sequence spans 113 residues: Hydrogenase maturation factor HypA (113 aa).

Histidine 2 serves as a coordination point for Ni(2+). Zn(2+) contacts are provided by cysteine 73, cysteine 76, cysteine 89, and cysteine 92.

This sequence belongs to the HypA/HybF family.

Involved in the maturation of [NiFe] hydrogenases. Required for nickel insertion into the metal center of the hydrogenase. In Aeromonas salmonicida (strain A449), this protein is Hydrogenase maturation factor HypA.